We begin with the raw amino-acid sequence, 858 residues long: Toll-like receptor 5 (858 aa).

A signal peptide spans 1 to 20 (MGDHLDLLLGVVLMAGPVFG). The Extracellular segment spans residues 21 to 639 (IPSCSFDGRI…DEEEVLKSLK (619 aa)). 2 N-linked (GlcNAc...) asparagine glycosylation sites follow: Asn-37 and Asn-46. LRR repeat units follow at residues 45–68 (LNTT…SFPF), 71–93 (QLQL…AFRN), 95–117 (PNLR…AFQG), 120–143 (HLFE…YFRN), 146–166 (ALTR…HPSF), 171–192 (SLKS…ELEP), 197–211 (TLSF…LYSR), 214–229 (VDWG…MVLE), and 234–235 (SG). Asn-245 carries an N-linked (GlcNAc...) asparagine glycan. 11 LRR repeats span residues 260–284 (LAHH…TFAG), 289–301 (SVRH…GFVF), 313–334 (DLKV…AFYG), 337–355 (NLQV…YSSN), 385–401 (KLQT…TIHF), 412–431 (GNKL…IHLS), 449–470 (HLQI…QTPS), 474–495 (SLEQ…ELCW), 503–524 (HLQV…VFSH), 527–546 (ALRG…HNDL), and 549–567 (NLEI…NPDV). Asn-342 carries an N-linked (GlcNAc...) asparagine glycan. A glycan (N-linked (GlcNAc...) asparagine) is linked at Asn-422. Residues 579–631 (NKFICECELSTFINWLNHTNVTIAGPPADIYCVYPDSFSGVSLFSLSTEGCDE) enclose the LRRCT domain. 2 disulfides stabilise this stretch: Cys-583–Cys-610 and Cys-585–Cys-629. Residues Asn-595 and Asn-598 are each glycosylated (N-linked (GlcNAc...) asparagine). A helical transmembrane segment spans residues 640 to 660 (FSLFIVCTVTLTLFLMTILTV). Topologically, residues 661–858 (TKFRGFCFIC…IPLQTVATIS (198 aa)) are cytoplasmic. The 146-residue stretch at 691 to 836 (YKYDAYLCFS…WFLHKLSQQI (146 aa)) folds into the TIR domain. Phosphotyrosine is present on Tyr-798. Ser-805 bears the Phosphoserine; by PKD/PRKD1 mark.

Belongs to the Toll-like receptor family. Homodimer. Interacts with MYD88 (via TIR domain). Interacts with TICAM1 (via TIR domain). Interacts with UNC93B1; this interaction is essential for proper TLR5 localization to the plasma membrane. Post-translationally, phosphorylated at Ser-805 by PKD/PRKD1; phosphorylation induces the production of inflammatory cytokines. Phosphorylated at Tyr-798 upon flagellin binding; required for signaling. As to expression, highly expressed on the basolateral surface of intestinal epithelia. Expressed also in other cells such as lung epithelial cells.

Its subcellular location is the cell membrane. Its function is as follows. Pattern recognition receptor (PRR) located on the cell surface that participates in the activation of innate immunity and inflammatory response. Recognizes small molecular motifs named pathogen-associated molecular pattern (PAMPs) expressed by pathogens and microbe-associated molecular patterns (MAMPs) usually expressed by resident microbiota. Upon ligand binding such as bacterial flagellins, recruits intracellular adapter proteins MYD88 and TRIF leading to NF-kappa-B activation, cytokine secretion and induction of the inflammatory response. Plays thereby an important role in the relationship between the intestinal epithelium and enteric microbes and contributes to the gut microbiota composition throughout life. This is Toll-like receptor 5 (TLR5) from Homo sapiens (Human).